The sequence spans 228 residues: MFDISKDFVSIFYRKETLKNCMFGIIGSRSETTLRQQNDKDWSFFVNDANRITGFNFFNIKKSFKKFFLSHRFNEGLNYPSLKIMKRISELLGYDLISLANKVPFVVCEVVSVIPIANTHLKRCKVNTGLTKSLDIVCGANNVRVGMKTVLVQVGGVLPSGTVIKKTKIAGFDSVGMLCSEKELNLKQKNEGIIEINPKIKVGKPFIDVYLNKQHSKWVNTKKRVKLS.

In terms of domain architecture, tRNA-binding spans 99–207 (LANKVPFVVC…PKIKVGKPFI (109 aa)).

This is an uncharacterized protein from Mycoplasma genitalium (strain ATCC 33530 / DSM 19775 / NCTC 10195 / G37) (Mycoplasmoides genitalium).